The sequence spans 562 residues: NAD-dependent malic enzyme (562 aa).

Residue Tyr101 is the Proton donor of the active site. Arg154 is an NAD(+) binding site. The active-site Proton acceptor is Lys172. A divalent metal cation-binding residues include Glu243, Asp244, and Asp267. NAD(+)-binding residues include Asp267 and Asn415.

This sequence belongs to the malic enzymes family. In terms of assembly, homotetramer. Mg(2+) serves as cofactor. Mn(2+) is required as a cofactor.

It carries out the reaction (S)-malate + NAD(+) = pyruvate + CO2 + NADH. The catalysed reaction is oxaloacetate + H(+) = pyruvate + CO2. In Aliivibrio salmonicida (strain LFI1238) (Vibrio salmonicida (strain LFI1238)), this protein is NAD-dependent malic enzyme.